The primary structure comprises 328 residues: tRNA methyltransferase 10 homolog A (328 aa).

Disordered stretches follow at residues 1 to 91 (MSSE…RKRV) and 281 to 328 (HKAC…PVLQ). Ser-22 bears the Phosphoserine mark. Positions 43–83 (RQLKKLMKQKQWEEQREQRKEKRKEKRKRKKLERRQLESNS) form a coiled coil. Over residues 52–62 (KQWEEQREQRK) the composition is skewed to basic and acidic residues. The span at 63–75 (EKRKEKRKRKKLE) shows a compositional bias: basic residues. The SAM-dependent MTase TRM10-type domain occupies 88–278 (RKRVRRDVAR…TILPQRKGAV (191 aa)). Positions 305-319 (ESCRDNPDSPQKDEQ) are enriched in basic and acidic residues.

It belongs to the class IV-like SAM-binding methyltransferase superfamily. TRM10 family. Interacts with tRNA.

It is found in the nucleus. The protein localises to the nucleolus. It carries out the reaction guanosine(9) in tRNA + S-adenosyl-L-methionine = N(1)-methylguanosine(9) in tRNA + S-adenosyl-L-homocysteine + H(+). Its function is as follows. S-adenosyl-L-methionine-dependent guanine N(1)-methyltransferase that catalyzes the formation of N(1)-methylguanine at position 9 (m1G9) in tRNAs. Probably not able to catalyze formation of N(1)-methyladenine at position 9 (m1A9) in tRNAs. The chain is tRNA methyltransferase 10 homolog A (Trmt10a) from Mus musculus (Mouse).